Here is a 170-residue protein sequence, read N- to C-terminus: Putative 5'(3')-deoxyribonucleotidase (170 aa).

Asp-28 serves as the catalytic Nucleophile. Mg(2+) contacts are provided by Asp-28, Asp-30, and Asp-134. The active-site Proton donor is the Asp-30.

This sequence belongs to the 5'(3')-deoxyribonucleotidase family. It depends on Mg(2+) as a cofactor.

In terms of biological role, dephosphorylates the 5' and 2'(3')-phosphates of deoxyribonucleotides. This Vibrio parahaemolyticus (KVP40) protein is Putative 5'(3')-deoxyribonucleotidase.